We begin with the raw amino-acid sequence, 78 residues long: Large ribosomal subunit protein bL28 (78 aa).

It belongs to the bacterial ribosomal protein bL28 family.

The protein is Large ribosomal subunit protein bL28 of Pseudomonas aeruginosa (strain LESB58).